A 271-amino-acid polypeptide reads, in one-letter code: L-aspartate dehydrogenase (271 aa).

NAD(+)-binding residues include A124 and N192. The active site involves H222.

This sequence belongs to the L-aspartate dehydrogenase family.

The enzyme catalyses L-aspartate + NADP(+) + H2O = oxaloacetate + NH4(+) + NADPH + H(+). The catalysed reaction is L-aspartate + NAD(+) + H2O = oxaloacetate + NH4(+) + NADH + H(+). It functions in the pathway cofactor biosynthesis; NAD(+) biosynthesis; iminoaspartate from L-aspartate (dehydrogenase route): step 1/1. Specifically catalyzes the NAD or NADP-dependent dehydrogenation of L-aspartate to iminoaspartate. This Methanococcoides burtonii (strain DSM 6242 / NBRC 107633 / OCM 468 / ACE-M) protein is L-aspartate dehydrogenase.